Reading from the N-terminus, the 130-residue chain is Hydrogenase maturation factor HypA (130 aa).

Histidine 2 contributes to the Ni(2+) binding site. Zn(2+)-binding residues include cysteine 74, cysteine 77, cysteine 90, and cysteine 93.

This sequence belongs to the HypA/HybF family.

Its function is as follows. Involved in the maturation of [NiFe] hydrogenases. Required for nickel insertion into the metal center of the hydrogenase. The sequence is that of Hydrogenase maturation factor HypA from Desulfatibacillum aliphaticivorans.